The sequence spans 260 residues: MRILITNDDGINAPGLAALEQVALELAGPGGEVWTVAPAFEQSGVGHCISYTHPMLIARMGERRFAAEGSPADCVLAGLHDVMKDAPPDLVLSGVNRGNNSAENALYSGTLGGAMEAALQGLRAIALSQFFGPRNYGRTDPFEIAQSHGVQVIRRILDTWPQERPDYRLFYNVNFPPVPAAEVKGLRAVRQGFREGTRFSAEPHLSPSGKRFLWIKGGDQQQRTAPGTDAAANLDGYVSVTPMRADLTADDALEALQATL.

A divalent metal cation is bound by residues aspartate 8, aspartate 9, serine 43, and asparagine 96.

This sequence belongs to the SurE nucleotidase family. A divalent metal cation is required as a cofactor.

It is found in the cytoplasm. The enzyme catalyses a ribonucleoside 5'-phosphate + H2O = a ribonucleoside + phosphate. Functionally, nucleotidase that shows phosphatase activity on nucleoside 5'-monophosphates. This is 5'-nucleotidase SurE from Ruegeria pomeroyi (strain ATCC 700808 / DSM 15171 / DSS-3) (Silicibacter pomeroyi).